Here is a 70-residue protein sequence, read N- to C-terminus: Putative antitoxin VapB34 (70 aa).

Antitoxin component of a possible type II toxin-antitoxin (TA) system. The cognate toxin is VapC34. This chain is Putative antitoxin VapB34 (vapB34), found in Mycobacterium tuberculosis (strain CDC 1551 / Oshkosh).